The sequence spans 816 residues: Neuroligin-4, Y-linked (816 aa).

Residues 1–43 form the signal peptide; that stretch reads MLRPQGLLWLPLLFTSVCVMLNSNVLLWITALAIKFTLIDSQA. At 44–676 the chain is on the extracellular side; that stretch reads QYPVVNTNYG…TKRDYSTELS (633 aa). Residue Asn102 is glycosylated (N-linked (GlcNAc...) asparagine). Cystine bridges form between Cys110/Cys146 and Cys306/Cys317. Residues 359–364 are interaction with NRXN1; that stretch reads QGEFLN. Residues Cys476 and Cys510 are joined by a disulfide bond. Asn511 carries an N-linked (GlcNAc...) asparagine glycan. A disordered region spans residues 636 to 659; the sequence is TKRPAITPANNPKHSKDPHKTGPE. The segment covering 649 to 658 has biased composition (basic and acidic residues); it reads HSKDPHKTGP. Residues 677–697 form a helical membrane-spanning segment; it reads VTIAVGASLLFLNILAFAALY. Topologically, residues 698–816 are cytoplasmic; that stretch reads YKKDKRRHET…LPHGHSTTRV (119 aa). Ser712 bears the Phosphoserine mark.

The protein belongs to the type-B carboxylesterase/lipase family. Homodimer. Interacts with NRXN1 in a calcium-dependent manner. Interaction with neurexins is mediated by heparan sulfate glycan modification on neurexin. Interacts through its C-terminus with DLG4/PSD-95 third PDZ domain. As to expression, expressed in fetal and adult brain, prostate and testis.

It is found in the cell membrane. It localises to the postsynaptic density membrane. Functionally, cell surface protein involved in cell-cell-interactions via its interactions with neurexin family members. The sequence is that of Neuroligin-4, Y-linked (NLGN4Y) from Homo sapiens (Human).